Here is a 280-residue protein sequence, read N- to C-terminus: Phosphatidylglycerol--prolipoprotein diacylglyceryl transferase (280 aa).

A run of 3 helical transmembrane segments spans residues 19–39 (LSVR…YFVA), 56–76 (IIFY…VIFQ), and 90–110 (IWHG…AGVI). Arg-138 contacts a 1,2-diacyl-sn-glycero-3-phospho-(1'-sn-glycerol). 2 consecutive transmembrane segments (helical) span residues 204–224 (LGET…FIEG) and 236–256 (IRVA…LIVY).

Belongs to the Lgt family.

The protein localises to the cell membrane. The enzyme catalyses L-cysteinyl-[prolipoprotein] + a 1,2-diacyl-sn-glycero-3-phospho-(1'-sn-glycerol) = an S-1,2-diacyl-sn-glyceryl-L-cysteinyl-[prolipoprotein] + sn-glycerol 1-phosphate + H(+). It participates in protein modification; lipoprotein biosynthesis (diacylglyceryl transfer). Its function is as follows. Catalyzes the transfer of the diacylglyceryl group from phosphatidylglycerol to the sulfhydryl group of the N-terminal cysteine of a prolipoprotein, the first step in the formation of mature lipoproteins. The sequence is that of Phosphatidylglycerol--prolipoprotein diacylglyceryl transferase from Staphylococcus aureus (strain MRSA252).